Here is a 907-residue protein sequence, read N- to C-terminus: Protein translocase subunit SecA (907 aa).

Residues Gln87, 105–109 (GEGKT), and Asp512 each bind ATP. Residues 834-907 (QEDVERMEEQ…KKYKQCHGKI (74 aa)) form a disordered region. 2 stretches are compositionally biased toward basic and acidic residues: residues 836–853 (DVER…EAAR) and 873–888 (EEAH…KVGR). Zn(2+)-binding residues include Cys892, Cys894, Cys903, and His904. Positions 898-907 (KKYKQCHGKI) are enriched in basic residues.

The protein belongs to the SecA family. In terms of assembly, monomer and homodimer. Part of the essential Sec protein translocation apparatus which comprises SecA, SecYEG and auxiliary proteins SecDF-YajC and YidC. Zn(2+) serves as cofactor.

Its subcellular location is the cell inner membrane. It localises to the cytoplasm. The catalysed reaction is ATP + H2O + cellular proteinSide 1 = ADP + phosphate + cellular proteinSide 2.. Functionally, part of the Sec protein translocase complex. Interacts with the SecYEG preprotein conducting channel. Has a central role in coupling the hydrolysis of ATP to the transfer of proteins into and across the cell membrane, serving both as a receptor for the preprotein-SecB complex and as an ATP-driven molecular motor driving the stepwise translocation of polypeptide chains across the membrane. The chain is Protein translocase subunit SecA from Aliivibrio fischeri (strain MJ11) (Vibrio fischeri).